Reading from the N-terminus, the 102-residue chain is Complement inhibitor RaCI3 (102 aa).

Residues 1–24 form the signal peptide; the sequence is MAALNGLVLLLLTISAMFISECYS. 3 disulfides stabilise this stretch: Cys-37-Cys-61, Cys-42-Cys-63, and Cys-57-Cys-78.

The protein belongs to the RaCI family. As to expression, expressed in salivary glands.

The protein localises to the secreted. Complement inhibitor. Prevents complement-mediated C5 activation by binding to C5. Binds C5 at a different binding site than the other tick complement inhibitors OmCI and CirpT1, and the drug eculizumab. Inhibits complement in human and guinea pig but not in other species tested (rabbit, rat, mouse, and pig). This chain is Complement inhibitor RaCI3, found in Dermacentor andersoni (Rocky mountain wood tick).